The following is a 609-amino-acid chain: Glutamine--fructose-6-phosphate aminotransferase [isomerizing] (609 aa).

Catalysis depends on Cys-2, which acts as the Nucleophile; for GATase activity. Residues 2-219 form the Glutamine amidotransferase type-2 domain; the sequence is CGIVGYIGGR…DGECARLTRD (218 aa). 2 consecutive SIS domains span residues 285-424 and 458-599; these read SSDL…LRGT and LARE…VDQP. Catalysis depends on Lys-604, which acts as the For Fru-6P isomerization activity.

Homodimer.

Its subcellular location is the cytoplasm. It catalyses the reaction D-fructose 6-phosphate + L-glutamine = D-glucosamine 6-phosphate + L-glutamate. Catalyzes the first step in hexosamine metabolism, converting fructose-6P into glucosamine-6P using glutamine as a nitrogen source. This is Glutamine--fructose-6-phosphate aminotransferase [isomerizing] from Gloeobacter violaceus (strain ATCC 29082 / PCC 7421).